Consider the following 250-residue polypeptide: Pyrroloquinoline-quinone synthase (250 aa).

The protein belongs to the PqqC family.

It catalyses the reaction 6-(2-amino-2-carboxyethyl)-7,8-dioxo-1,2,3,4,7,8-hexahydroquinoline-2,4-dicarboxylate + 3 O2 = pyrroloquinoline quinone + 2 H2O2 + 2 H2O + H(+). The protein operates within cofactor biosynthesis; pyrroloquinoline quinone biosynthesis. In terms of biological role, ring cyclization and eight-electron oxidation of 3a-(2-amino-2-carboxyethyl)-4,5-dioxo-4,5,6,7,8,9-hexahydroquinoline-7,9-dicarboxylic-acid to PQQ. This is Pyrroloquinoline-quinone synthase from Xanthomonas oryzae pv. oryzae (strain PXO99A).